The primary structure comprises 177 residues: Austinoid biosynthesis clusters protein F (177 aa).

The protein belongs to the trt14 isomerase family. Homodimer.

Its pathway is secondary metabolite biosynthesis; terpenoid biosynthesis. Its function is as follows. Part of the gene cluster B that mediates the biosynthesis of austinol and dehydroaustinol, two fungal meroterpenoids. The first step of the pathway is the synthesis of 3,5-dimethylorsellinic acid by the polyketide synthase ausA. 3,5-dimethylorsellinic acid is then prenylated by the polyprenyl transferase ausN. Further epoxidation by the FAD-dependent monooxygenase ausM and cyclization by the probable terpene cyclase ausL lead to the formation of protoaustinoid A. Protoaustinoid A is then oxidized to spiro-lactone preaustinoid A3 by the combined action of the FAD-binding monooxygenases ausB and ausC, and the dioxygenase ausE. Acid-catalyzed keto-rearrangement and ring contraction of the tetraketide portion of preaustinoid A3 by ausJ lead to the formation of preaustinoid A4. The aldo-keto reductase ausK, with the help of ausH, is involved in the next step by transforming preaustinoid A4 into isoaustinone which is in turn hydroxylated by the P450 monooxygenase ausI to form austinolide. Finally, the cytochrome P450 monooxygenase ausG modifies austinolide to austinol. Austinol can be further modified to dehydroaustinol which forms a diffusible complex with diorcinol that initiates conidiation. Due to genetic rearrangements of the clusters and the subsequent loss of some enzymes, the end products of the Emericella nidulans austinoid biosynthesis clusters are austinol and dehydroaustinol, even if additional enzymes, such as the O-acetyltransferase ausQ and the cytochrome P450 monooxygenase ausR are still functional. The polypeptide is Austinoid biosynthesis clusters protein F (Emericella nidulans (strain FGSC A4 / ATCC 38163 / CBS 112.46 / NRRL 194 / M139) (Aspergillus nidulans)).